We begin with the raw amino-acid sequence, 116 residues long: HTH-type transcriptional regulator SarV (116 aa).

Positions 51–74 (RDTLHFEMLWDTSKIDVIIRKIYK) form a DNA-binding region, H-T-H motif.

The protein belongs to the SarA family.

It is found in the cytoplasm. Functionally, part of the pathway by which MgrA and SarA control autolysis. The sequence is that of HTH-type transcriptional regulator SarV (sarV) from Staphylococcus aureus (strain Mu50 / ATCC 700699).